A 212-amino-acid polypeptide reads, in one-letter code: MNIFRLTGDLSHLAAIIILLLKIWKSRSCAGISGKSQLLFALVFTTRYLDLFTSFISLYNTSMKLIYIACSYATVYLIYMKFKATYDGNHDTFRVEFLIVPVGGLSFLVNHDFSPLEILWTFSIYLESVAILPQLFMISKTGEAETITTHYLFFLGLYRALYLVNWIWRYYFEGFFDLIAVVAGVVQTVLYCDFFYLYVTKVLKGKKLSLPA.

At 1 to 4 the chain is on the lumenal side; sequence MNIF. A helical membrane pass occupies residues 5–24; the sequence is RLTGDLSHLAAIIILLLKIW. At 25–32 the chain is on the cytoplasmic side; sequence KSRSCAGI. A helical membrane pass occupies residues 33–52; it reads SGKSQLLFALVFTTRYLDLF. An interaction with the K-D-E-L motif on target proteins region spans residues 47-48; sequence RY. Topologically, residues 53–58 are lumenal; sequence TSFISL. The chain crosses the membrane as a helical span at residues 59–79; sequence YNTSMKLIYIACSYATVYLIY. Over 80-92 the chain is Cytoplasmic; that stretch reads MKFKATYDGNHDT. A helical transmembrane segment spans residues 93-110; sequence FRVEFLIVPVGGLSFLVN. Residues 111-116 lie on the Lumenal side of the membrane; the sequence is HDFSPL. Residues 117–135 traverse the membrane as a helical segment; sequence EILWTFSIYLESVAILPQL. At 136–149 the chain is on the cytoplasmic side; the sequence is FMISKTGEAETITT. A helical transmembrane segment spans residues 150-168; the sequence is HYLFFLGLYRALYLVNWIW. Positions 159-169 are interaction with the K-D-E-L motif on target proteins; the sequence is RALYLVNWIWR. Topologically, residues 169-178 are lumenal; it reads RYYFEGFFDL. Residues 179–199 traverse the membrane as a helical segment; that stretch reads IAVVAGVVQTVLYCDFFYLYV. The Cytoplasmic segment spans residues 200 to 212; the sequence is TKVLKGKKLSLPA. The important for recycling of cargo proteins with the sequence motif K-D-E-L from the Golgi to the endoplasmic reticulum stretch occupies residues 204 to 207; that stretch reads KGKK.

Belongs to the ERD2 family.

It is found in the endoplasmic reticulum membrane. The protein resides in the golgi apparatus membrane. Its subcellular location is the cytoplasmic vesicle. It localises to the COPI-coated vesicle membrane. Functionally, membrane receptor that binds the K-D-E-L sequence motif in the C-terminal part of endoplasmic reticulum resident proteins and maintains their localization in that compartment by participating to their vesicle-mediated recycling back from the Golgi. Binding is pH dependent, and is optimal at pH 5-5.4. The sequence is that of ER lumen protein-retaining receptor 2 (KDELR2) from Gallus gallus (Chicken).